The sequence spans 362 residues: tRNA-specific 2-thiouridylase MnmA (362 aa).

Residues 9-16 (GMSGGVDS) and Met35 contribute to the ATP site. The segment at 95 to 97 (NPD) is interaction with target base in tRNA. The active-site Nucleophile is the Cys100. A disulfide bridge connects residues Cys100 and Cys196. Residue Gly124 participates in ATP binding. The interval 146 to 148 (KDQ) is interaction with tRNA. Cys196 functions as the Cysteine persulfide intermediate in the catalytic mechanism. The interaction with tRNA stretch occupies residues 308-309 (RY).

Belongs to the MnmA/TRMU family.

It localises to the cytoplasm. It catalyses the reaction S-sulfanyl-L-cysteinyl-[protein] + uridine(34) in tRNA + AH2 + ATP = 2-thiouridine(34) in tRNA + L-cysteinyl-[protein] + A + AMP + diphosphate + H(+). Functionally, catalyzes the 2-thiolation of uridine at the wobble position (U34) of tRNA, leading to the formation of s(2)U34. This Nitrosomonas europaea (strain ATCC 19718 / CIP 103999 / KCTC 2705 / NBRC 14298) protein is tRNA-specific 2-thiouridylase MnmA.